We begin with the raw amino-acid sequence, 1357 residues long: DNA-directed RNA polymerase subunit beta (1357 aa).

The protein belongs to the RNA polymerase beta chain family. In terms of assembly, the RNAP catalytic core consists of 2 alpha, 1 beta, 1 beta' and 1 omega subunit. When a sigma factor is associated with the core the holoenzyme is formed, which can initiate transcription.

It catalyses the reaction RNA(n) + a ribonucleoside 5'-triphosphate = RNA(n+1) + diphosphate. Functionally, DNA-dependent RNA polymerase catalyzes the transcription of DNA into RNA using the four ribonucleoside triphosphates as substrates. The sequence is that of DNA-directed RNA polymerase subunit beta from Nitrosospira multiformis (strain ATCC 25196 / NCIMB 11849 / C 71).